The primary structure comprises 225 residues: ATP synthase F(0) complex subunit a (225 aa).

Helical transmembrane passes span 10-30, 69-89, 96-116, 135-155, 168-188, and 194-214; these read PSLL…ILLL, LILI…LLPY, QLSM…LIGL, LLIP…PIAL, LLIQ…PPLS, and VLIL…YVFV.

The protein belongs to the ATPase A chain family. Component of the ATP synthase complex composed at least of ATP5F1A/subunit alpha, ATP5F1B/subunit beta, ATP5MC1/subunit c (homooctomer), MT-ATP6/subunit a, MT-ATP8/subunit 8, ATP5ME/subunit e, ATP5MF/subunit f, ATP5MG/subunit g, ATP5MK/subunit k, ATP5MJ/subunit j, ATP5F1C/subunit gamma, ATP5F1D/subunit delta, ATP5F1E/subunit epsilon, ATP5PF/subunit F6, ATP5PB/subunit b, ATP5PD/subunit d, ATP5PO/subunit OSCP. ATP synthase complex consists of a soluble F(1) head domain (subunits alpha(3) and beta(3)) - the catalytic core - and a membrane F(0) domain - the membrane proton channel (subunits c, a, 8, e, f, g, k and j). These two domains are linked by a central stalk (subunits gamma, delta, and epsilon) rotating inside the F1 region and a stationary peripheral stalk (subunits F6, b, d, and OSCP). Interacts with DNAJC30; interaction is direct.

Its subcellular location is the mitochondrion inner membrane. The catalysed reaction is H(+)(in) = H(+)(out). Its function is as follows. Subunit a, of the mitochondrial membrane ATP synthase complex (F(1)F(0) ATP synthase or Complex V) that produces ATP from ADP in the presence of a proton gradient across the membrane which is generated by electron transport complexes of the respiratory chain. ATP synthase complex consist of a soluble F(1) head domain - the catalytic core - and a membrane F(1) domain - the membrane proton channel. These two domains are linked by a central stalk rotating inside the F(1) region and a stationary peripheral stalk. During catalysis, ATP synthesis in the catalytic domain of F(1) is coupled via a rotary mechanism of the central stalk subunits to proton translocation. With the subunit c (ATP5MC1), forms the proton-conducting channel in the F(0) domain, that contains two crucial half-channels (inlet and outlet) that facilitate proton movement from the mitochondrial intermembrane space (IMS) into the matrix. Protons are taken up via the inlet half-channel and released through the outlet half-channel, following a Grotthuss mechanism. This chain is ATP synthase F(0) complex subunit a, found in Alligator mississippiensis (American alligator).